Reading from the N-terminus, the 926-residue chain is MDRIVIRGARQHNLKNIDVEIPKNKLVVITGPSGSGKSSLAFDTLYAEGQRRYVESLSAYARQFLGVMEKPEVDSIEGLSPAIAIDQKTTSKNPRSTVGTVTEIYDYLRVLWANVGKPHCPHCGNLLSGLSAHEILDRIVEKYKGKRVMILSPIVRGKKGEFRELLRQIEKWGYSRVKVDGELRRVIEVPPLEKNKKHTIELVIDRLTVSEEERARLLEDVEKALEFSSGLVKIEEVESGKEELFSEKLVCPEHGFSIPELSARLFSFNSPYGACPSCKGLGVKWEIDPAVLIDPEKPAVKAVKIVESGYFNYLRFPIANVIRKLGYDPRTPWKKLPESVRATVLYGSESLNFEGIIPHLERRFLEEESERIREEIEDYIVEKPCPECKGARLRKEALAVLIDGKSIWDVVNMPVGKAKEFFEELYEKLEGKEKIIADRLLKEIIERLGFLVNVGLDYLSLSRSATTLSGGEMQRIRLATQLGSKLTGVLYVLDEPSIGLHPRDTSKLINTLKGLRDLGNTVVVVEHDPETIESADHVIELGPGAGKHGGYLVAQGTVEEIKSHPSSLTGAYLSGRKEIPVPKERRKPSGKFIRIVRAKEHNLKNINVDIPLGLFVCITGVSGSGKSTLIYDILYKYAKNYFYGTHEQVGEVEKIEGLENIDKVINIDQSPIGRTPRSNPATYTKVFDLIRNLFAQTPEAKARGYKPGRFSFNVKGGRCEACQGEGVIKVEMHFLPPVYVTCEVCKGKRYNRETLEITYKGKNIADVLEMTVDEAYDFFENHPAIRRKLQILKDVGLGYIKLGQPAPTLSGGEAQRIKLARELSKKETGRTLYLLDEPTTGLHMDDVKKLIDVLQRLVDKGNTVVVIEHNLDVIKCADWIIDLGPEGGERGGQVVAVGTPEEVAQNPNSYTGKYLRKYLKKETLKV.

An ATP-binding site is contributed by 31-38; that stretch reads GPSGSGKS. The C4-type zinc-finger motif lies at 251-278; sequence CPEHGFSIPELSARLFSFNSPYGACPSC. 2 ABC transporter domains span residues 308–568 and 588–916; these read SGYF…PSSL and PSGK…KYLR. Residue 620–627 participates in ATP binding; the sequence is GVSGSGKS. The C4-type zinc-finger motif lies at 719 to 745; it reads CEACQGEGVIKVEMHFLPPVYVTCEVC.

Belongs to the ABC transporter superfamily. UvrA family. Forms a heterotetramer with UvrB during the search for lesions.

Its subcellular location is the cytoplasm. The UvrABC repair system catalyzes the recognition and processing of DNA lesions. UvrA is an ATPase and a DNA-binding protein. A damage recognition complex composed of 2 UvrA and 2 UvrB subunits scans DNA for abnormalities. When the presence of a lesion has been verified by UvrB, the UvrA molecules dissociate. The polypeptide is UvrABC system protein A (Aquifex aeolicus (strain VF5)).